The following is a 311-amino-acid chain: MTKIIFMGTPDFSTTVLEMLIAEHDVIAVVTQPDRPVGRKRVMTPPPVKKVAMKYDLPVYQPEKLSGSEELEQLLQLDVDLIVTAAFGQLLPESLLALPNLGAINVHASLLPKYRGGAPIHQAIIDGEQETGITIMYMVKKLDAGNIISQQAIKIEENDNVGTMHDKLSVLGADLLKETLPSIIEGTNESVPQDDTQATFASNIRREDERISWNKPGRQVFNQIRGLSPWPVAYTTMDDTNLKIYDAELVETNKINEPGTIIETTKKAIIVATNDNEAVAIKDMQLAGKKRMLAANYLSGAQNTLVGKKLI.

A (6S)-5,6,7,8-tetrahydrofolate-binding site is contributed by 109-112 (SLLP).

The protein belongs to the Fmt family.

It carries out the reaction L-methionyl-tRNA(fMet) + (6R)-10-formyltetrahydrofolate = N-formyl-L-methionyl-tRNA(fMet) + (6S)-5,6,7,8-tetrahydrofolate + H(+). Its function is as follows. Attaches a formyl group to the free amino group of methionyl-tRNA(fMet). The formyl group appears to play a dual role in the initiator identity of N-formylmethionyl-tRNA by promoting its recognition by IF2 and preventing the misappropriation of this tRNA by the elongation apparatus. The protein is Methionyl-tRNA formyltransferase of Staphylococcus aureus (strain USA300).